Here is a 938-residue protein sequence, read N- to C-terminus: Isoleucine--tRNA ligase (938 aa).

The 'HIGH' region motif lies at 58-68 (PYANGSIHIGH). Lys183 is subject to N6-acetyllysine. Glu561 serves as a coordination point for L-isoleucyl-5'-AMP. The 'KMSKS' region signature appears at 602–606 (KMSKS). Lys605 contacts ATP. Zn(2+) is bound by residues Cys901, Cys904, Cys921, and Cys924.

It belongs to the class-I aminoacyl-tRNA synthetase family. IleS type 1 subfamily. In terms of assembly, monomer. Requires Zn(2+) as cofactor.

It is found in the cytoplasm. The enzyme catalyses tRNA(Ile) + L-isoleucine + ATP = L-isoleucyl-tRNA(Ile) + AMP + diphosphate. Its function is as follows. Catalyzes the attachment of isoleucine to tRNA(Ile). As IleRS can inadvertently accommodate and process structurally similar amino acids such as valine, to avoid such errors it has two additional distinct tRNA(Ile)-dependent editing activities. One activity is designated as 'pretransfer' editing and involves the hydrolysis of activated Val-AMP. The other activity is designated 'posttransfer' editing and involves deacylation of mischarged Val-tRNA(Ile). This Escherichia coli O9:H4 (strain HS) protein is Isoleucine--tRNA ligase.